The following is a 251-amino-acid chain: Octanoyltransferase (251 aa).

The BPL/LPL catalytic domain maps to 56 to 241 (AETPDEIWIV…NLDGASAAAD (186 aa)). Residues 96 to 103 (RGGQITYH), 168 to 170 (ALG), and 181 to 183 (GLS) each bind substrate. Cys-199 acts as the Acyl-thioester intermediate in catalysis.

Belongs to the LipB family.

The protein localises to the cytoplasm. The enzyme catalyses octanoyl-[ACP] + L-lysyl-[protein] = N(6)-octanoyl-L-lysyl-[protein] + holo-[ACP] + H(+). It participates in protein modification; protein lipoylation via endogenous pathway; protein N(6)-(lipoyl)lysine from octanoyl-[acyl-carrier-protein]: step 1/2. Its function is as follows. Catalyzes the transfer of endogenously produced octanoic acid from octanoyl-acyl-carrier-protein onto the lipoyl domains of lipoate-dependent enzymes. Lipoyl-ACP can also act as a substrate although octanoyl-ACP is likely to be the physiological substrate. In Burkholderia vietnamiensis (strain G4 / LMG 22486) (Burkholderia cepacia (strain R1808)), this protein is Octanoyltransferase.